Reading from the N-terminus, the 86-residue chain is Putative defensin-like protein 211 (86 aa).

The first 19 residues, 1 to 19 (MNTIVLFLTLLILVSSCTS), serve as a signal peptide directing secretion. Disulfide bonds link C55/C72, C58/C77, and C62/C79.

This sequence belongs to the DEFL family.

It is found in the secreted. The polypeptide is Putative defensin-like protein 211 (Arabidopsis thaliana (Mouse-ear cress)).